The following is a 104-amino-acid chain: MIFSQVTLQVEKTVKKKNGAEDNVIKPITLPAVKQRISQSRLDEFSMIGLGKNVRYELNGIGEMEDLIFNYFLDEKGETFKRTTWERNPKNNKMILEGLVSNGI.

Belongs to the skunalikevirus head completion protein 1 family.

The protein resides in the virion. In terms of biological role, probable head completion protein that exhibits an open central channel for viral DNA ejection. Part of the head-tail connector by binding to the portal protein and to the head completion protein 2. Plays a role in morphogenesis of the virion capsid after genome packaging. In Lactococcus lactis (Lactococcus lactis bacteriophage p2), this protein is Probable head completion protein 1.